Consider the following 527-residue polypeptide: Hopanoid C-2 methylase (527 aa).

In terms of domain architecture, B12-binding spans 36 to 148; sequence VAAFMPPQGL…AKLTHDVTRP (113 aa). The Radical SAM core domain occupies 173-408; it reads AECSKYLLGS…HDQVVAMWKD (236 aa). Cys-189, Cys-193, and Cys-196 together coordinate [4Fe-4S] cluster.

It belongs to the radical SAM superfamily. Requires [4Fe-4S] cluster as cofactor.

In terms of biological role, required for methylation of hopanoids at the C-2 position. This chain is Hopanoid C-2 methylase, found in Rhodopseudomonas palustris (strain TIE-1).